The following is a 383-amino-acid chain: Activator of 90 kDa heat shock protein ATPase homolog (383 aa).

Disordered stretches follow at residues 97 to 126 (KKVL…KPAE) and 209 to 228 (EQSQ…TTTN).

The protein belongs to the AHA1 family. Interacts with hspD/HSP90.

Its subcellular location is the cytoplasm. Its function is as follows. Co-chaperone that stimulates hspD/HSP90 ATPase activity. This Dictyostelium discoideum (Social amoeba) protein is Activator of 90 kDa heat shock protein ATPase homolog (ahsa).